We begin with the raw amino-acid sequence, 139 residues long: D-ribose pyranase (139 aa).

Histidine 20 serves as the catalytic Proton donor. Residues aspartate 28, histidine 106, and 128–130 (YAN) contribute to the substrate site.

It belongs to the RbsD / FucU family. RbsD subfamily. Homodecamer.

The protein localises to the cytoplasm. The catalysed reaction is beta-D-ribopyranose = beta-D-ribofuranose. Its pathway is carbohydrate metabolism; D-ribose degradation; D-ribose 5-phosphate from beta-D-ribopyranose: step 1/2. Catalyzes the interconversion of beta-pyran and beta-furan forms of D-ribose. In Cronobacter sakazakii (strain ATCC BAA-894) (Enterobacter sakazakii), this protein is D-ribose pyranase.